Consider the following 3526-residue polypeptide: WD repeat and FYVE domain-containing protein 3 (3526 aa).

Residues Ser-1942 and Ser-2278 each carry the phosphoserine modification. The sufficient for localization to p62 bodies/ALIS stretch occupies residues 2285 to 2981 (LTGSRRNRKE…PHPPKRVRSR (697 aa)). 2 disordered regions span residues 2403–2429 (ETNVASEIPSKQPETPDDIPQKKPARY) and 2459–2522 (SSEG…EKTD). Residues 2468 to 2477 (EPEHGEDTIA) show a composition bias toward basic and acidic residues. At Ser-2492 the chain carries Phosphoserine. A BEACH-type PH domain is found at 2531–2656 (EEGEKIQHMY…IRNKVYQRFL (126 aa)). Residues 2586 to 3526 (MHEPIIPRGA…RGSEDGPRNC (941 aa)) are interaction with SQSTM1. In terms of domain architecture, BEACH spans 2683–2976 (GLLSTLVGEK…QLFKKPHPPK (294 aa)). An interaction with ATG5 region spans residues 2981 to 3526 (RLNGDNAGIS…RGSEDGPRNC (546 aa)). WD repeat units lie at residues 3077–3115 (SEWGQILCAICPNPKLVITGGTSTVVCVWEMGTSKEKAK), 3125–3164 (GHTDTVTCATASLAYHIIVSGSRDRTCIIWDLNKLSFLTQ), 3167–3206 (GHRAPVSALCINELTGDIVSCAGTYIHVWSINGNPIVSVN), and 3210–3254 (GRSQ…VPET). A disordered region spans residues 3272–3335 (AQIGQEAQDE…SGSDDSRRWS (64 aa)). Residues 3278–3290 (AQDEDSSDSEADE) show a composition bias toward acidic residues. The interval 3313-3363 (AASCRATAAWCTDSGSDDSRRWSDQLSLDEKDGFIFVNYSEGQTRAHLQGP) is interaction with GABARAP. 2 positions are modified to phosphoserine: Ser-3335 and Ser-3339. The LC3-interacting region (LIR) signature appears at 3346–3349 (FIFV). The WD 5 repeat unit spans residues 3408-3447 (AHPAEVTALGISKDHSRILVGDSRGRVFSWSVSDQPGRSA). The FYVE-type zinc-finger motif lies at 3454–3514 (DEGGDSCSGC…VCQNCYYNLQ (61 aa)). Cys-3460, Cys-3463, Cys-3476, Cys-3479, Cys-3484, Cys-3487, Cys-3506, and Cys-3509 together coordinate Zn(2+).

As to quaternary structure, directly interacts with ATG5 and associates with the ATG12-ATG5-ATG16L complex. Interacts with p62/SQSTM1; this interaction is required to recruit WDFY3 to cytoplasmic bodies and to PML bodies. Directly interacts with GABARAP, GABARAPL1 and GABARAPL2; the interaction with GABARAP is required for WDFY3 recruitment to MAP1LC3B-positive p62/SQSTM1 bodies. Weakly interacts with MAP1LC3C; this interaction is direct. Does not interact with MAP1LC3A, nor MAP1LC3B. Interacts with TRAF6. Expressed in osteoclast and their mononuclear precursors (at protein level).

It localises to the nucleus membrane. The protein resides in the cytoplasm. The protein localises to the cytosol. Its subcellular location is the nucleus. It is found in the PML body. It localises to the membrane. The protein resides in the perikaryon. The protein localises to the cell projection. Its subcellular location is the axon. Required for selective macroautophagy (aggrephagy). Acts as an adapter protein by linking specific proteins destined for degradation to the core autophagic machinery members, such as the ATG5-ATG12-ATG16L E3-like ligase, SQSTM1 and LC3. Along with p62/SQSTM1, involved in the formation and autophagic degradation of cytoplasmic ubiquitin-containing inclusions (p62 bodies, ALIS/aggresome-like induced structures). Along with SQSTM1, required to recruit ubiquitinated proteins to PML bodies in the nucleus. Important for normal brain development. Essential for the formation of axonal tracts throughout the brain and spinal cord, including the formation of the major forebrain commissures. Involved in the ability of neural cells to respond to guidance cues. Required for cortical neurons to respond to the trophic effects of netrin-1/NTN1. Regulates Wnt signaling through the removal of DVL3 aggregates, likely in an autophagy-dependent manner. This process may be important for the determination of brain size during embryonic development. May regulate osteoclastogenesis by acting on the TNFSF11/RANKL - TRAF6 pathway. After cytokinetic abscission, involved in midbody remnant degradation. In vitro strongly binds to phosphatidylinositol 3-phosphate (PtdIns3P). This chain is WD repeat and FYVE domain-containing protein 3 (WDFY3), found in Homo sapiens (Human).